Reading from the N-terminus, the 302-residue chain is m7GpppN-mRNA hydrolase NUDT17 (302 aa).

The Nudix hydrolase domain maps to 89–237; it reads GRGVDLGVAV…DGTETPKHLP (149 aa). A Nudix box motif is present at residues 128–149; it reads GHVEPDEELLDGGLRELWEESG. Residues E143 and E147 each contribute to the Mg(2+) site.

Belongs to the Nudix hydrolase family. Mg(2+) is required as a cofactor. Requires Mn(2+) as cofactor.

It catalyses the reaction a 5'-end (N(7)-methyl 5'-triphosphoguanosine)-ribonucleoside in mRNA + H2O = N(7)-methyl-GDP + a 5'-end phospho-ribonucleoside in mRNA + 2 H(+). Functionally, acts as a decapping enzyme capable of hydrolyzing monomethylated capped RNAs (in vitro). Hydrolyzes monomethylated capped RNA after alpha and beta phosphates to form N(7)-methyl-GDP. Shows low activity towards unmethylated capped RNA. This Bos taurus (Bovine) protein is m7GpppN-mRNA hydrolase NUDT17 (NUDT17).